A 951-amino-acid chain; its full sequence is Zinc fingers and homeoboxes protein 3 (951 aa).

A disordered region spans residues 1–66; the sequence is MASKRKSTTP…SSTDGSALAN (66 aa). The segment covering 42-58 has biased composition (low complexity); that stretch reads PSEAPEASSEAAPNPSS. C2H2-type zinc fingers lie at residues 77–100 and 109–132; these read YSCK…TSEH and FVCT…AKCH. Residues 198-249 form a disordered region; it reads KENAPTQPGGEALPKPLAGETEGKEGDHTFINGATPVSQASANSTKPPHTAN. Residues 232–244 show a composition bias toward polar residues; it reads TPVSQASANSTKP. The segment at 237–481 is required for homodimerization and interaction with NFYA; the sequence is ASANSTKPPH…LLTACPSITS (245 aa). The required for repressor activity stretch occupies residues 297–495; it reads LSSIPTYNAA…DANIYKNKKS (199 aa). DNA-binding regions (homeobox) lie at residues 298-357 and 487-546; these read SSIP…GISW and ANIY…RNLK. The tract at residues 490 to 548 is required for nuclear localization; that stretch reads YKNKKSHEQLSALKGSFCRNQFPGQSEVEHLTKVTGLSTREVRKWFSDRRYHCRNLKGT. Phosphoserine is present on serine 597. A DNA-binding region (homeobox 3) is located at residues 605–664; it reads TPTKYKERAPEQLRVLESSFAQNPLPPEEELDRLRSETKMTRREIDGWFSERRKRVNAEE. 2 disordered regions span residues 621 to 642 and 661 to 702; these read ESSF…RSET and NAEE…NGSS. Residues 661–674 are compositionally biased toward basic and acidic residues; it reads NAEETKKADGHAPQ. Acidic residues predominate over residues 675–690; the sequence is EEAEGAEEEGRDEELA. A phosphoserine mark is found at serine 701 and serine 716. 2 consecutive DNA-binding regions (homeobox) follow at residues 759-818 and 830-889; these read PSRV…KNGQ and FPPG…TRAV. The segment at 885–951 is disordered; sequence ETRAVADTSS…PQSGRQLETD (67 aa). Residues serine 922 and serine 941 each carry the phosphoserine modification. Residues 937 to 951 are compositionally biased toward polar residues; it reads FDTSSPQSGRQLETD.

Belongs to the ZHX family. In terms of assembly, homodimer (via homeobox domain 1). Heterodimer with ZHX1 (via homeobox domain 1). Heterodimer with ZHX2 (via homeobox domain 1). Heterodimerization with ZHX1 is a prerequisite for repressor activity. Interacts with NFYA. Widely expressed.

Its subcellular location is the cytoplasm. The protein localises to the nucleus. Its function is as follows. Acts as a transcriptional repressor. Involved in the early stages of mesenchymal stem cell (MSC) osteogenic differentiation. Is a regulator of podocyte gene expression during primary glomerula disease. Binds to promoter DNA. The protein is Zinc fingers and homeoboxes protein 3 (Zhx3) of Rattus norvegicus (Rat).